A 344-amino-acid polypeptide reads, in one-letter code: MQVNVDLKENSYKVFIDEFKELTIKGNVAIITNPKVGGLWLEFLLKNLKCDKKFIISVPDGEEYKNLNTIEQILEQLFSSKCDRKTTLIALGGGVISDMTGFAASIFERGIDFINFPTTLLAQVDASVGGKTGVNNKFGKNLIGSFHQPKAVFCESEFLNTLPPREFSAGVAEAIKMAVMFDKKFFEFFENSTLKSSDEIAKMVQTCVKIKADVVVKDEKETGIRAVLNYGHTFAHVIERITDYKEFLHGEAVSIGINMANNLALRLGFLSKNEVFKISETLKKFNLPTTFKIPNADEFYELFFMDKKTQNSKIKFILANSIGEFKICTDIPKDVVIATLKDFE.

Residues 60–65 (DGEEYK), 94–98 (GVISD), 118–119 (TT), K131, K140, and 158–161 (FLNT) contribute to the NAD(+) site. Residues E173, H232, and H249 each contribute to the Zn(2+) site.

It belongs to the sugar phosphate cyclases superfamily. Dehydroquinate synthase family. Requires Co(2+) as cofactor. Zn(2+) serves as cofactor. NAD(+) is required as a cofactor.

The protein localises to the cytoplasm. The enzyme catalyses 7-phospho-2-dehydro-3-deoxy-D-arabino-heptonate = 3-dehydroquinate + phosphate. Its pathway is metabolic intermediate biosynthesis; chorismate biosynthesis; chorismate from D-erythrose 4-phosphate and phosphoenolpyruvate: step 2/7. Functionally, catalyzes the conversion of 3-deoxy-D-arabino-heptulosonate 7-phosphate (DAHP) to dehydroquinate (DHQ). This is 3-dehydroquinate synthase from Campylobacter hominis (strain ATCC BAA-381 / DSM 21671 / CCUG 45161 / LMG 19568 / NCTC 13146 / CH001A).